We begin with the raw amino-acid sequence, 88 residues long: Small ribosomal subunit protein uS19 (88 aa).

This sequence belongs to the universal ribosomal protein uS19 family.

In terms of biological role, protein S19 forms a complex with S13 that binds strongly to the 16S ribosomal RNA. This is Small ribosomal subunit protein uS19 from Ureaplasma parvum serovar 3 (strain ATCC 27815 / 27 / NCTC 11736).